Consider the following 343-residue polypeptide: Tribbles homolog 2 (343 aa).

A disordered region spans residues 25–50 (EELSSIRSAEPSQSFSPNLGSPSPPE). The span at 29–45 (SIRSAEPSQSFSPNLGS) shows a compositional bias: polar residues. Residues 61 to 308 (IGKYLLLEPL…SQEILDHPWF (248 aa)) enclose the Protein kinase domain.

It belongs to the protein kinase superfamily. CAMK Ser/Thr protein kinase family. Tribbles subfamily.

It localises to the cytoplasm. The protein localises to the cytoskeleton. Its function is as follows. Interacts with MAPK kinases and regulates activation of MAP kinases. Does not display kinase activity. In Mus musculus (Mouse), this protein is Tribbles homolog 2.